The following is a 282-amino-acid chain: Para-Rep C2 (282 aa).

Residues 1-99 enclose the CRESS-DNA virus Rep endonuclease domain; sequence MASKRWCFTL…ETLIAEIGAP (99 aa). The short motif at 7–10 is the RCR-1 element; the sequence is CFTL. Residues Glu38 and His47 each coordinate a divalent metal cation. The RCR-2 signature appears at 47-49; sequence HLQ. A Nuclear localization signal motif is present at residues 56-77; the sequence is KLIRLGGLKKKFGSIAHWEIAK. The active-site For DNA cleavage activity is the Tyr86. Residues 86-89 carry the RCR-3 motif; that stretch reads YCTK. Residues 99–105 carry the Nuclear localization signal motif; it reads PVKKGSN. Position 174–182 (174–182) interacts with ATP; sequence GPDGGEGKS.

This sequence belongs to the nanoviridea/circoviridae replication-associated protein family. In terms of assembly, homooligomer (Potential). Rep binds to repeated DNA motifs (iterons). The cofactor is Mg(2+). Requires Mn(2+) as cofactor.

The protein resides in the host nucleus. The catalysed reaction is ATP + H2O = ADP + phosphate + H(+). Initiates and terminates the replication only of its own subviral DNA molecule. The closed circular ssDNA genome is first converted to a superhelical dsDNA. Rep binds a specific hairpin at the genome origin of replication. Introduces an endonucleolytic nick within the intergenic region of the genome, thereby initiating the rolling circle replication (RCR). Following cleavage, binds covalently to the 5'-phosphate of DNA as a tyrosyl ester. The cleavage gives rise to a free 3'-OH that serves as a primer for the cellular DNA polymerase. The polymerase synthesizes the (+) strand DNA by rolling circle mechanism. After one round of replication, a Rep-catalyzed nucleotidyl transfer reaction releases a circular single-stranded virus genome, thereby terminating the replication. Displays origin-specific DNA cleavage, nucleotidyl transferase, ATPase and helicase activities. The protein is Para-Rep C2 (C2) of Milk vetch dwarf C2 alphasatellite (MVDC2A).